The following is a 191-amino-acid chain: Thymidylate kinase (191 aa).

7 to 14 (GIDGVGKS) is an ATP binding site.

The protein belongs to the thymidylate kinase family.

The catalysed reaction is dTMP + ATP = dTDP + ADP. Functionally, phosphorylation of dTMP to form dTDP in both de novo and salvage pathways of dTTP synthesis. In Helicobacter acinonychis (strain Sheeba), this protein is Thymidylate kinase.